The chain runs to 592 residues: Aspartate--tRNA(Asp/Asn) ligase (592 aa).

E171 contributes to the L-aspartate binding site. Positions 195 to 198 (QLFK) are aspartate. R217 serves as a coordination point for L-aspartate. ATP contacts are provided by residues 217–219 (RDE) and Q226. Position 447 (H447) interacts with L-aspartate. E481 serves as a coordination point for ATP. R488 serves as a coordination point for L-aspartate. Residue 533–536 (GLDR) participates in ATP binding.

The protein belongs to the class-II aminoacyl-tRNA synthetase family. Type 1 subfamily. In terms of assembly, homodimer.

The protein localises to the cytoplasm. The catalysed reaction is tRNA(Asx) + L-aspartate + ATP = L-aspartyl-tRNA(Asx) + AMP + diphosphate. Its function is as follows. Aspartyl-tRNA synthetase with relaxed tRNA specificity since it is able to aspartylate not only its cognate tRNA(Asp) but also tRNA(Asn). Reaction proceeds in two steps: L-aspartate is first activated by ATP to form Asp-AMP and then transferred to the acceptor end of tRNA(Asp/Asn). The chain is Aspartate--tRNA(Asp/Asn) ligase from Psychromonas ingrahamii (strain DSM 17664 / CCUG 51855 / 37).